Consider the following 425-residue polypeptide: AFP homolog 2 (425 aa).

Disordered stretches follow at residues 1–207 and 288–327; these read MDDD…SGTE and PFAG…DNSN. The necessary and sufficient for the interaction with TOPLESS stretch occupies residues 7–17; the sequence is LELSLGLSCGG. A compositionally biased stretch (low complexity) spans 20 to 34; it reads GKAKGNNNNNAGSSS. Positions 37 to 54 are enriched in basic and acidic residues; sequence YRAEGGDRSAKVIDDFKN. Positions 66–81 are enriched in low complexity; the sequence is PSSGSQRSDSGQQPPQ. The span at 124-140 shows a compositional bias: basic and acidic residues; that stretch reads NDDKKKEKDSSHVDMHE. 3 stretches are compositionally biased toward polar residues: residues 146–158, 185–197, and 288–299; these read SHVS…GSTA, TDTN…TGQR, and PFAGRVPSNSAT. Positions 322–425 are necessary and sufficient for the interaction with the JAZ proteins; sequence TGDNSNLNTA…MGMTAASAHT (104 aa).

The protein belongs to the Ninja family. As to quaternary structure, component of a complex at least composed of TOPLESS, TPR2, TPR3, TIFY4B/PPD2, MYC3/ATR2 and TIFY3B/JAZ12. Interacts (via C-terminus) with TIFY10A/JAZ1; TIFY10B/JAZ2; TIFY6B/JAZ3; TIFY6A/JAZ4; TIFY11A/JAZ5; TIFY11B/JAZ6; TIFY7/JAZ9; TIFY9/JAZ10; TIFY3A/JAZ11; TIFY3B/JAZ12; TIFY4A/PPD1; TIFY4B/PPD2 and TIFY8 (via TIFY domain). Interacts with TOPLESS. Interacts with PAT1H1.

Its subcellular location is the nucleus. Its function is as follows. Acts as a transcriptional repressor. Negative regulator of jasmonate responses. Connects the JAZ proteins and the non-JAZ protein TIFY8 with the TOPLESS corepressors. The polypeptide is AFP homolog 2 (Arabidopsis thaliana (Mouse-ear cress)).